Consider the following 273-residue polypeptide: 2,3,4,5-tetrahydropyridine-2,6-dicarboxylate N-succinyltransferase (273 aa).

Substrate contacts are provided by Arg-104 and Asp-141.

The protein belongs to the transferase hexapeptide repeat family. Homotrimer.

Its subcellular location is the cytoplasm. The catalysed reaction is (S)-2,3,4,5-tetrahydrodipicolinate + succinyl-CoA + H2O = (S)-2-succinylamino-6-oxoheptanedioate + CoA. Its pathway is amino-acid biosynthesis; L-lysine biosynthesis via DAP pathway; LL-2,6-diaminopimelate from (S)-tetrahydrodipicolinate (succinylase route): step 1/3. In Laribacter hongkongensis (strain HLHK9), this protein is 2,3,4,5-tetrahydropyridine-2,6-dicarboxylate N-succinyltransferase.